We begin with the raw amino-acid sequence, 524 residues long: Bifunctional purine biosynthesis protein PurH (524 aa).

Residues 1–144 (MTRRALVSVS…KNSAHVGVVV (144 aa)) form the MGS-like domain.

It belongs to the PurH family.

The enzyme catalyses (6R)-10-formyltetrahydrofolate + 5-amino-1-(5-phospho-beta-D-ribosyl)imidazole-4-carboxamide = 5-formamido-1-(5-phospho-D-ribosyl)imidazole-4-carboxamide + (6S)-5,6,7,8-tetrahydrofolate. It catalyses the reaction IMP + H2O = 5-formamido-1-(5-phospho-D-ribosyl)imidazole-4-carboxamide. It participates in purine metabolism; IMP biosynthesis via de novo pathway; 5-formamido-1-(5-phospho-D-ribosyl)imidazole-4-carboxamide from 5-amino-1-(5-phospho-D-ribosyl)imidazole-4-carboxamide (10-formyl THF route): step 1/1. It functions in the pathway purine metabolism; IMP biosynthesis via de novo pathway; IMP from 5-formamido-1-(5-phospho-D-ribosyl)imidazole-4-carboxamide: step 1/1. The protein is Bifunctional purine biosynthesis protein PurH of Anaeromyxobacter dehalogenans (strain 2CP-1 / ATCC BAA-258).